A 530-amino-acid polypeptide reads, in one-letter code: Ubiquitin carboxyl-terminal hydrolase 17-like protein 18 (530 aa).

The USP domain maps to 80–375 (AGLQNMGNTC…QAYVLFYIQK (296 aa)). Cys-89 (nucleophile) is an active-site residue. Residue His-334 is the Proton acceptor of the active site. 2 stretches are compositionally biased toward basic and acidic residues: residues 382–392 (SESVSRGREPR) and 398–413 (DTDR…RDHP). Disordered regions lie at residues 382-414 (SESV…DHPC) and 509-530 (RGRA…LVCQ). A compositionally biased stretch (basic residues) spans 510-524 (GRARRSKGKNKHSKR).

It belongs to the peptidase C19 family. USP17 subfamily.

The protein localises to the nucleus. It localises to the endoplasmic reticulum. It carries out the reaction Thiol-dependent hydrolysis of ester, thioester, amide, peptide and isopeptide bonds formed by the C-terminal Gly of ubiquitin (a 76-residue protein attached to proteins as an intracellular targeting signal).. Deubiquitinating enzyme that removes conjugated ubiquitin from specific proteins to regulate different cellular processes that may include cell proliferation, progression through the cell cycle, apoptosis, cell migration, and the cellular response to viral infection. The chain is Ubiquitin carboxyl-terminal hydrolase 17-like protein 18 (USP17L18) from Homo sapiens (Human).